The following is a 236-amino-acid chain: MHDHSLHSGHDHGLGPGSFHDRGAPHARGDLRRRAFTVGVGGPVGSGKTALVLALCRALRDSRSLGVVTNDIFTREDAEFLVRNDALPAERIRAVETGGCPHAAIREDVTANLLALEELTEAHRPEILFCESGGDNLAAHFSRELADYTIYVIDVAGGDKVPRKGGPGITQADLLVVNKTDLATAVGADLDVMARDAARMRGDGPVVFAQVTRGVGVPEIAGHVLHAYRHAVGAPH.

Residues 1-26 (MHDHSLHSGHDHGLGPGSFHDRGAPH) are disordered. Residue 42–49 (GPVGSGKT) coordinates GTP.

It belongs to the SIMIBI class G3E GTPase family. UreG subfamily. Homodimer. UreD, UreF and UreG form a complex that acts as a GTP-hydrolysis-dependent molecular chaperone, activating the urease apoprotein by helping to assemble the nickel containing metallocenter of UreC. The UreE protein probably delivers the nickel.

The protein localises to the cytoplasm. Facilitates the functional incorporation of the urease nickel metallocenter. This process requires GTP hydrolysis, probably effectuated by UreG. The polypeptide is Urease accessory protein UreG (Anaeromyxobacter sp. (strain Fw109-5)).